We begin with the raw amino-acid sequence, 488 residues long: 3-octaprenyl-4-hydroxybenzoate carboxy-lyase (488 aa).

N172 contributes to the Mn(2+) binding site. Residues 175–177 (IYR), 189–191 (RWL), and 194–195 (RG) contribute to the prenylated FMN site. E238 is a Mn(2+) binding site. The Proton donor role is filled by D287.

This sequence belongs to the UbiD family. As to quaternary structure, homohexamer. The cofactor is prenylated FMN. Requires Mn(2+) as cofactor.

It localises to the cell membrane. It carries out the reaction a 4-hydroxy-3-(all-trans-polyprenyl)benzoate + H(+) = a 2-(all-trans-polyprenyl)phenol + CO2. Its pathway is cofactor biosynthesis; ubiquinone biosynthesis. Its function is as follows. Catalyzes the decarboxylation of 3-octaprenyl-4-hydroxy benzoate to 2-octaprenylphenol, an intermediate step in ubiquinone biosynthesis. This chain is 3-octaprenyl-4-hydroxybenzoate carboxy-lyase, found in Pseudomonas syringae pv. tomato (strain ATCC BAA-871 / DC3000).